A 584-amino-acid chain; its full sequence is (+)-larreatricin hydroxylase, chloroplastic (584 aa).

Residues 1 to 32 constitute a chloroplast transit peptide; the sequence is MASLSSQSKLLATPYSFPYHTKPSRVSLRRVS. A thylakoid-targeting transit peptide spans 33 to 79; sequence CKASNDNKDKPNDQEKTFSIDRRNMLIGLGGLYGASNVFPSNQSTLA. 2 disulfides stabilise this stretch: Cys91/Cys106 and Cys105/Cys168. Residues His167, His188, His197, His319, His323, and His353 each coordinate Cu cation. Residues 171-188 constitute a cross-link (2'-(S-cysteinyl)-histidine (Cys-His)); sequence CNGAYDQVGFPDVNIQVH. Positions 432-584 are cleaved as a propeptide — removed in mature form; it reads RLRSKATTTT…KIEFVRDEED (153 aa).

It belongs to the tyrosinase family. It depends on Cu(2+) as a cofactor.

The protein localises to the plastid. Its subcellular location is the chloroplast thylakoid lumen. The catalysed reaction is (+)-larreatricin + AH2 + O2 = (+)-3'-hydroxylarreatricin + A + H2O. Functionally, enantio-specific polyphenol oxidase involved in aromatic ring hydroxylation. Involved in the biosynthesis of the creosote bush 8-8' linked lignans. Has a strong preference for the 3' position of (+)-larreatricin. In Larrea tridentata (Creosote bush), this protein is (+)-larreatricin hydroxylase, chloroplastic.